We begin with the raw amino-acid sequence, 369 residues long: Phospho-N-acetylmuramoyl-pentapeptide-transferase (369 aa).

10 helical membrane passes run 2-22 (IAILLAVAFGITFTLFTTPFF), 54-74 (GLVIVVASIISYFLANFFLGL), 80-100 (GLLVIFMFVGMSLVGFLDDIL), 113-133 (FYKVVLQSFIAVPFALLTFLV), 158-178 (ALFSLGIIGVFSAWILYLLWI), 195-215 (LDGLAAGAMIFTMLAYVVIGF), 241-261 (PLDMSILAAAILGSLLGFLWW), 268-288 (IMMGDTGALALGGAAAALSIL), 293-313 (LLFLVLGGLFVIEAGSVILQI), and 347-367 (FWIIAGLFTALGIGLFYADWL).

Belongs to the glycosyltransferase 4 family. MraY subfamily. It depends on Mg(2+) as a cofactor.

The protein localises to the cell membrane. The catalysed reaction is UDP-N-acetyl-alpha-D-muramoyl-L-alanyl-gamma-D-glutamyl-meso-2,6-diaminopimeloyl-D-alanyl-D-alanine + di-trans,octa-cis-undecaprenyl phosphate = di-trans,octa-cis-undecaprenyl diphospho-N-acetyl-alpha-D-muramoyl-L-alanyl-D-glutamyl-meso-2,6-diaminopimeloyl-D-alanyl-D-alanine + UMP. The protein operates within cell wall biogenesis; peptidoglycan biosynthesis. Functionally, catalyzes the initial step of the lipid cycle reactions in the biosynthesis of the cell wall peptidoglycan: transfers peptidoglycan precursor phospho-MurNAc-pentapeptide from UDP-MurNAc-pentapeptide onto the lipid carrier undecaprenyl phosphate, yielding undecaprenyl-pyrophosphoryl-MurNAc-pentapeptide, known as lipid I. This Tropheryma whipplei (strain Twist) (Whipple's bacillus) protein is Phospho-N-acetylmuramoyl-pentapeptide-transferase.